Reading from the N-terminus, the 355-residue chain is Protein RecA (355 aa).

67 to 74 contributes to the ATP binding site; that stretch reads GPESSGKT.

The protein belongs to the RecA family.

The protein resides in the cytoplasm. Can catalyze the hydrolysis of ATP in the presence of single-stranded DNA, the ATP-dependent uptake of single-stranded DNA by duplex DNA, and the ATP-dependent hybridization of homologous single-stranded DNAs. It interacts with LexA causing its activation and leading to its autocatalytic cleavage. This is Protein RecA from Shewanella halifaxensis (strain HAW-EB4).